Consider the following 212-residue polypeptide: Large ribosomal subunit protein uL1 (212 aa).

The protein belongs to the universal ribosomal protein uL1 family. As to quaternary structure, part of the 50S ribosomal subunit.

Its function is as follows. Binds directly to 23S rRNA. Probably involved in E site tRNA release. In terms of biological role, protein L1 is also a translational repressor protein, it controls the translation of its operon by binding to its mRNA. This Haloferax volcanii (strain ATCC 29605 / DSM 3757 / JCM 8879 / NBRC 14742 / NCIMB 2012 / VKM B-1768 / DS2) (Halobacterium volcanii) protein is Large ribosomal subunit protein uL1.